The chain runs to 1522 residues: Lysine-specific demethylase 5B (1522 aa).

In terms of domain architecture, JmjN spans 10-51 (CPVFEPSWEEFADPFAFIHKIRPIAEQTGICKVRPPPDWQPP). The ARID domain occupies 75–165 (TRVKLNFLDQ…ILYPYNLFQS (91 aa)). Residues 180 to 192 (DTKDKEYKPHDIP) show a composition bias toward basic and acidic residues. Residues 180 to 229 (DTKDKEYKPHDIPQRQSVQPSESCPPARRAKRLRAEATNIKTESDSPEVR) are disordered. A PHD-type 1 zinc finger spans residues 284–334 (LYVCLLCGSGNDEDRLLLCDGCDDSYHTFCLIPPLHDVPKGDWRCPQCLAQ). Residue tyrosine 400 coordinates 2-oxoglutarate. Residues 428-594 (EYLDSGWNLN…LGRQCIEHYR (167 aa)) enclose the JmjC domain. Positions 474 and 476 each coordinate Fe cation. Serine 482, asparagine 484, and lysine 492 together coordinate 2-oxoglutarate. Residue histidine 562 participates in Fe cation binding. Residues 667 to 719 (CYKCKTTCFMSAVYCPCKPGLLVCLYHVEDLCSCPTYQYKLGYRYTLEELYPM) form a C5HC2 zinc finger. Residues 1151–1199 (LKVCVCQKEPAAPMIQCELCRGFFHTGCVSVPHALQGPRVWLCPQCRRS) form a PHD-type 2 zinc finger. Residues 1353-1365 (LQAEQKPSVGPSN) show a composition bias toward polar residues. 2 disordered regions span residues 1353 to 1373 (LQAEQKPSVGPSNEKSECCRG) and 1400 to 1460 (ARVR…DSED). The span at 1400–1416 (ARVRKMRTPKKKKLKLS) shows a compositional bias: basic residues. Residues 1426 to 1442 (RMERERERLLEAQRSSE) show a composition bias toward basic and acidic residues. The PHD-type 3 zinc-finger motif lies at 1462–1516 (DAICPAVTCLQPEGEEVDWVQCDGSCNQWFHQVCVGISPEMAEKEDYICASCAGK).

Belongs to the JARID1 histone demethylase family. The cofactor is Fe(2+).

It localises to the nucleus. The enzyme catalyses N(6),N(6),N(6)-trimethyl-L-lysyl(4)-[histone H3] + 3 2-oxoglutarate + 3 O2 = L-lysyl(4)-[histone H3] + 3 formaldehyde + 3 succinate + 3 CO2. Histone demethylase that demethylates 'Lys-4' of histone H3, thereby playing a central role in histone code. Does not demethylate histone H3 'Lys-9' or H3 'Lys-27'. Demethylates trimethylated, dimethylated and monomethylated H3 'Lys-4'. Acts as a transcriptional corepressor. May repress the CLOCK-BMAL1 heterodimer-mediated transcriptional activation of the core clock component PER2. The sequence is that of Lysine-specific demethylase 5B (KDM5B) from Gallus gallus (Chicken).